We begin with the raw amino-acid sequence, 506 residues long: Cobyric acid synthase (506 aa).

The GATase cobBQ-type domain maps to 251–448; sequence DITIAIVQLP…LHGLFDSDAF (198 aa). Cysteine 332 serves as the catalytic Nucleophile. Histidine 440 is a catalytic residue.

This sequence belongs to the CobB/CobQ family. CobQ subfamily. In terms of assembly, homodimer.

The protein operates within cofactor biosynthesis; adenosylcobalamin biosynthesis. Its function is as follows. Catalyzes amidations at positions B, D, E, and G on adenosylcobyrinic A,C-diamide. NH(2) groups are provided by glutamine, and one molecule of ATP is hydrogenolyzed for each amidation. The polypeptide is Cobyric acid synthase (cbiP) (Salmonella typhimurium (strain LT2 / SGSC1412 / ATCC 700720)).